We begin with the raw amino-acid sequence, 99 residues long: NADH-ubiquinone oxidoreductase chain 4L (99 aa).

A run of 3 helical transmembrane segments spans residues 1–21 (MTIY…FFTQ), 25–45 (ILSL…SVAV), and 56–76 (VMIL…SLLV).

It belongs to the complex I subunit 4L family.

The protein localises to the mitochondrion membrane. It carries out the reaction a ubiquinone + NADH + 5 H(+)(in) = a ubiquinol + NAD(+) + 4 H(+)(out). Core subunit of the mitochondrial membrane respiratory chain NADH dehydrogenase (Complex I) that is believed to belong to the minimal assembly required for catalysis. Complex I functions in the transfer of electrons from NADH to the respiratory chain. The immediate electron acceptor for the enzyme is believed to be ubiquinone. This chain is NADH-ubiquinone oxidoreductase chain 4L (ND4L), found in Albinaria caerulea (Land snail).